A 486-amino-acid chain; its full sequence is Ribulose bisphosphate carboxylase large chain 1 (486 aa).

Substrate contacts are provided by Asn-125 and Thr-175. The active-site Proton acceptor is Lys-177. A substrate-binding site is contributed by Lys-179. Residues Lys-203, Asp-205, and Glu-206 each contribute to the Mg(2+) site. Residue Lys-203 is modified to N6-carboxylysine. His-295 serves as the catalytic Proton acceptor. The substrate site is built by Arg-296, His-328, and Ser-380.

This sequence belongs to the RuBisCO large chain family. Type I subfamily. In terms of assembly, heterohexadecamer of 8 large chains and 8 small chains. Mg(2+) serves as cofactor.

The catalysed reaction is 2 (2R)-3-phosphoglycerate + 2 H(+) = D-ribulose 1,5-bisphosphate + CO2 + H2O. It catalyses the reaction D-ribulose 1,5-bisphosphate + O2 = 2-phosphoglycolate + (2R)-3-phosphoglycerate + 2 H(+). In terms of biological role, ruBisCO catalyzes two reactions: the carboxylation of D-ribulose 1,5-bisphosphate, the primary event in carbon dioxide fixation, as well as the oxidative fragmentation of the pentose substrate. Both reactions occur simultaneously and in competition at the same active site. In Cereibacter sphaeroides (strain ATCC 17025 / ATH 2.4.3) (Rhodobacter sphaeroides), this protein is Ribulose bisphosphate carboxylase large chain 1.